We begin with the raw amino-acid sequence, 424 residues long: UDP-glycosyltransferase 76H1 (424 aa).

Residues serine 248, 306 to 307 (WA), 324 to 332 (HCGWNSTIE), and 346 to 349 (FADQ) each bind UDP-alpha-D-glucose.

This sequence belongs to the UDP-glycosyltransferase family.

May glycosylate diterpenes or flavonols in leaves. This is UDP-glycosyltransferase 76H1 from Stevia rebaudiana (Stevia).